The sequence spans 182 residues: Ribosome maturation factor RimM (182 aa).

The 80-residue stretch at 103–182 (VGDYYWKDLI…TIEVDWDPGF (80 aa)) folds into the PRC barrel domain.

It belongs to the RimM family. In terms of assembly, binds ribosomal protein uS19.

It is found in the cytoplasm. Its function is as follows. An accessory protein needed during the final step in the assembly of 30S ribosomal subunit, possibly for assembly of the head region. Essential for efficient processing of 16S rRNA. May be needed both before and after RbfA during the maturation of 16S rRNA. It has affinity for free ribosomal 30S subunits but not for 70S ribosomes. The polypeptide is Ribosome maturation factor RimM (Pectobacterium atrosepticum (strain SCRI 1043 / ATCC BAA-672) (Erwinia carotovora subsp. atroseptica)).